The primary structure comprises 229 residues: Growth factor receptor-bound protein 2 (229 aa).

2 SH3 domains span residues 1–58 (MEAV…MKPH) and 168–227 (QQPT…PVNR). Residues 60 to 171 (WFFGKIPRAK…RATNLLQQPT (112 aa)) enclose the SH2 domain.

Its subcellular location is the nucleus. The protein resides in the cytoplasm. It is found in the endosome. The protein localises to the golgi apparatus. In terms of biological role, adapter protein that provides a critical link between cell surface growth factor receptors and the Ras signaling pathway. Promotes meiotic reinitiation during oocyte maturation. This chain is Growth factor receptor-bound protein 2, found in Xenopus tropicalis (Western clawed frog).